Here is a 540-residue protein sequence, read N- to C-terminus: Chaperonin GroEL (540 aa).

ATP-binding positions include 29–32 (TLGP), 86–90 (DGTTT), G413, 477–479 (DAL), and D493.

It belongs to the chaperonin (HSP60) family. As to quaternary structure, forms a cylinder of 14 subunits composed of two heptameric rings stacked back-to-back. Interacts with the co-chaperonin GroES.

It is found in the cytoplasm. It carries out the reaction ATP + H2O + a folded polypeptide = ADP + phosphate + an unfolded polypeptide.. In terms of biological role, together with its co-chaperonin GroES, plays an essential role in assisting protein folding. The GroEL-GroES system forms a nano-cage that allows encapsulation of the non-native substrate proteins and provides a physical environment optimized to promote and accelerate protein folding. The polypeptide is Chaperonin GroEL (Clostridium botulinum (strain Eklund 17B / Type B)).